Here is a 204-residue protein sequence, read N- to C-terminus: Probable nicotinate-nucleotide adenylyltransferase (204 aa).

This sequence belongs to the NadD family.

The catalysed reaction is nicotinate beta-D-ribonucleotide + ATP + H(+) = deamido-NAD(+) + diphosphate. Its pathway is cofactor biosynthesis; NAD(+) biosynthesis; deamido-NAD(+) from nicotinate D-ribonucleotide: step 1/1. Functionally, catalyzes the reversible adenylation of nicotinate mononucleotide (NaMN) to nicotinic acid adenine dinucleotide (NaAD). The sequence is that of Probable nicotinate-nucleotide adenylyltransferase from Dehalococcoides mccartyi (strain ATCC BAA-2266 / KCTC 15142 / 195) (Dehalococcoides ethenogenes (strain 195)).